The sequence spans 138 residues: Small ribosomal subunit protein uS9 (138 aa).

The span at Pro-100–Ala-118 shows a compositional bias: basic and acidic residues. Residues Pro-100–Arg-138 are disordered. Basic residues predominate over residues Lys-119–Arg-138.

The protein belongs to the universal ribosomal protein uS9 family.

This chain is Small ribosomal subunit protein uS9, found in Trichormus variabilis (strain ATCC 29413 / PCC 7937) (Anabaena variabilis).